Consider the following 608-residue polypeptide: Dihydroxy-acid dehydratase, chloroplastic (608 aa).

Residues 1–34 constitute a chloroplast transit peptide; the sequence is MQATIFSPRATLFPCKPLLPSHNVNSRRPSIISC. Ser-35 carries the N-acetylserine modification. Cys-100 is a binding site for [2Fe-2S] cluster. Asp-132 provides a ligand contact to Mg(2+). Cys-173 is a [2Fe-2S] cluster binding site. Asp-174 contributes to the Mg(2+) binding site. Cys-245 is a binding site for [2Fe-2S] cluster. Glu-497 is a Mg(2+) binding site. The active-site Proton acceptor is the Ser-523.

This sequence belongs to the IlvD/Edd family. [2Fe-2S] cluster serves as cofactor. Mg(2+) is required as a cofactor.

It is found in the plastid. The protein localises to the chloroplast. It carries out the reaction (2R)-2,3-dihydroxy-3-methylbutanoate = 3-methyl-2-oxobutanoate + H2O. The catalysed reaction is (2R,3R)-2,3-dihydroxy-3-methylpentanoate = (S)-3-methyl-2-oxopentanoate + H2O. It functions in the pathway amino-acid biosynthesis; L-isoleucine biosynthesis; L-isoleucine from 2-oxobutanoate: step 3/4. Its pathway is amino-acid biosynthesis; L-valine biosynthesis; L-valine from pyruvate: step 3/4. With respect to regulation, is highly competitively inhibited by the fungal sesquiterpenoid aspterric acid, which is effective as a herbicide in spray applications. Functions in the biosynthesis of branched-chain amino acids. Catalyzes the dehydration of (2R,3R)-2,3-dihydroxy-3-methylpentanoate (2,3-dihydroxy-3-methylvalerate) into 2-oxo-3-methylpentanoate (2-oxo-3-methylvalerate) and of (2R)-2,3-dihydroxy-3-methylbutanoate (2,3-dihydroxyisovalerate) into 2-oxo-3-methylbutanoate (2-oxoisovalerate), the penultimate precursor to L-isoleucine and L-valine, respectively. In Arabidopsis thaliana (Mouse-ear cress), this protein is Dihydroxy-acid dehydratase, chloroplastic.